Consider the following 62-residue polypeptide: Bacteriocin piscicolin-126 (62 aa).

The propeptide occupies 1-18 (MKTVKELSVKEMQLTTGG). A disulfide bridge links Cys-27 with Cys-32.

It localises to the secreted. Inhibits the growth of several Gram-positive bacteria, especially the food-borne pathogen L.monocytogenes, but has no effect on the growth of a number of yeasts and Gram-negative bacteria. The protein is Bacteriocin piscicolin-126 (pisA) of Carnobacterium maltaromaticum (Carnobacterium piscicola).